Consider the following 355-residue polypeptide: Uroporphyrinogen decarboxylase (355 aa).

Substrate contacts are provided by residues arginine 36 to arginine 40, aspartate 85, tyrosine 160, serine 215, and histidine 334.

This sequence belongs to the uroporphyrinogen decarboxylase family. Homodimer.

Its subcellular location is the cytoplasm. The enzyme catalyses uroporphyrinogen III + 4 H(+) = coproporphyrinogen III + 4 CO2. It functions in the pathway porphyrin-containing compound metabolism; protoporphyrin-IX biosynthesis; coproporphyrinogen-III from 5-aminolevulinate: step 4/4. Its function is as follows. Catalyzes the decarboxylation of four acetate groups of uroporphyrinogen-III to yield coproporphyrinogen-III. In Rhodococcus jostii (strain RHA1), this protein is Uroporphyrinogen decarboxylase.